Here is a 374-residue protein sequence, read N- to C-terminus: Mannitol-1-phosphate 5-dehydrogenase (374 aa).

Alanine 3 to glycine 14 contacts NAD(+).

Belongs to the mannitol dehydrogenase family.

The catalysed reaction is D-mannitol 1-phosphate + NAD(+) = beta-D-fructose 6-phosphate + NADH + H(+). The protein is Mannitol-1-phosphate 5-dehydrogenase of Shouchella clausii (strain KSM-K16) (Alkalihalobacillus clausii).